The following is a 368-amino-acid chain: PPE family immunomodulator PPE68 (368 aa).

Disordered stretches follow at residues 255-280 (LGTS…LLRA) and 312-368 (AAAG…EDDW). Positions 312 to 327 (AAAGSSATGGAAPVGA) are enriched in low complexity. A compositionally biased stretch (acidic residues) spans 354-368 (REEDDEDDWDEEDDW).

The protein belongs to the mycobacterial PPE family. As to quaternary structure, homodimer. Interacts with PE35. PE35/PPE68 complex interacts with human TLR2.

It localises to the secreted. It is found in the cell wall. Its subcellular location is the cell membrane. The protein resides in the cell surface. Its function is as follows. Plays a major role in RD1-associated pathogenesis, and may contribute to the establishment and maintenance of M.tuberculosis infection. Together with PE35, stimulates the secretion of IL-10 and MCP-1 from human macrophages, via the interaction with human Toll-like receptor 2 (TLR2). This is PPE family immunomodulator PPE68 (PPE68) from Mycobacterium tuberculosis (strain CDC 1551 / Oshkosh).